Reading from the N-terminus, the 175-residue chain is Large ribosomal subunit protein uL18 (175 aa).

This sequence belongs to the universal ribosomal protein uL18 family. As to quaternary structure, part of the 50S ribosomal subunit. Contacts the 5S and 23S rRNAs.

This is one of the proteins that bind and probably mediate the attachment of the 5S RNA into the large ribosomal subunit, where it forms part of the central protuberance. This Methanosphaerula palustris (strain ATCC BAA-1556 / DSM 19958 / E1-9c) protein is Large ribosomal subunit protein uL18.